The chain runs to 579 residues: Peptidoglycan D,D-transpeptidase FtsI (579 aa).

Residues 15 to 35 (FCVIVGLLLAMVGAIVWRIVD) traverse the membrane as a helical segment. The Acyl-ester intermediate role is filled by serine 294. Positions 558-579 (DNLPTATEQQQVNAAPAKGGRG) are disordered. Residues 561–570 (PTATEQQQVN) show a composition bias toward polar residues.

This sequence belongs to the transpeptidase family. FtsI subfamily.

The protein localises to the cell inner membrane. It carries out the reaction Preferential cleavage: (Ac)2-L-Lys-D-Ala-|-D-Ala. Also transpeptidation of peptidyl-alanyl moieties that are N-acyl substituents of D-alanine.. It functions in the pathway cell wall biogenesis; peptidoglycan biosynthesis. In terms of biological role, catalyzes cross-linking of the peptidoglycan cell wall at the division septum. Binds penicillin. The sequence is that of Peptidoglycan D,D-transpeptidase FtsI from Pseudomonas aeruginosa (strain ATCC 15692 / DSM 22644 / CIP 104116 / JCM 14847 / LMG 12228 / 1C / PRS 101 / PAO1).